The sequence spans 151 residues: UPF0098 protein MTH_273 (151 aa).

Belongs to the UPF0098 family.

This chain is UPF0098 protein MTH_273, found in Methanothermobacter thermautotrophicus (strain ATCC 29096 / DSM 1053 / JCM 10044 / NBRC 100330 / Delta H) (Methanobacterium thermoautotrophicum).